Consider the following 268-residue polypeptide: NAD kinase (268 aa).

Residue Asp-45 is the Proton acceptor of the active site. Residues 45–46 (DG), 122–123 (NE), Arg-148, Asp-150, 161–166 (TAYGKS), Ala-185, and Gln-223 contribute to the NAD(+) site.

The protein belongs to the NAD kinase family. A divalent metal cation serves as cofactor.

Its subcellular location is the cytoplasm. The catalysed reaction is NAD(+) + ATP = ADP + NADP(+) + H(+). Functionally, involved in the regulation of the intracellular balance of NAD and NADP, and is a key enzyme in the biosynthesis of NADP. Catalyzes specifically the phosphorylation on 2'-hydroxyl of the adenosine moiety of NAD to yield NADP. This is NAD kinase from Latilactobacillus sakei subsp. sakei (strain 23K) (Lactobacillus sakei subsp. sakei).